Here is a 223-residue protein sequence, read N- to C-terminus: Small ribosomal subunit protein uS3 (223 aa).

Residues 38–106 (IKKYLKSKLA…EVHLNIVEIR (69 aa)) enclose the KH type-2 domain.

This sequence belongs to the universal ribosomal protein uS3 family. Part of the 30S ribosomal subunit. Forms a tight complex with proteins S10 and S14.

Its function is as follows. Binds the lower part of the 30S subunit head. Binds mRNA in the 70S ribosome, positioning it for translation. This is Small ribosomal subunit protein uS3 from Rhodospirillum rubrum (strain ATCC 11170 / ATH 1.1.1 / DSM 467 / LMG 4362 / NCIMB 8255 / S1).